The following is a 61-amino-acid chain: Large ribosomal subunit protein eL37 (61 aa).

Positions 19, 22, 34, and 37 each coordinate Zn(2+). The C4-type zinc finger occupies 19–37 (CRRCGRNAYNVSKHYCAAC).

This sequence belongs to the eukaryotic ribosomal protein eL37 family. Zn(2+) is required as a cofactor.

In terms of biological role, binds to the 23S rRNA. This chain is Large ribosomal subunit protein eL37, found in Saccharolobus islandicus (strain Y.N.15.51 / Yellowstone #2) (Sulfolobus islandicus).